The sequence spans 493 residues: Guanosine-5'-triphosphate,3'-diphosphate pyrophosphatase (493 aa).

It belongs to the GppA/Ppx family. GppA subfamily.

It catalyses the reaction guanosine 3'-diphosphate 5'-triphosphate + H2O = guanosine 3',5'-bis(diphosphate) + phosphate + H(+). It functions in the pathway purine metabolism; ppGpp biosynthesis; ppGpp from GTP: step 2/2. In terms of biological role, catalyzes the conversion of pppGpp to ppGpp. Guanosine pentaphosphate (pppGpp) is a cytoplasmic signaling molecule which together with ppGpp controls the 'stringent response', an adaptive process that allows bacteria to respond to amino acid starvation, resulting in the coordinated regulation of numerous cellular activities. In Salmonella paratyphi B (strain ATCC BAA-1250 / SPB7), this protein is Guanosine-5'-triphosphate,3'-diphosphate pyrophosphatase.